Here is a 215-residue protein sequence, read N- to C-terminus: MAGRFCQRDGGIMTAMVAVEILTECSQSSWNNSLHCGVFRHLPRNRPIIIGSSGEVFWVEYTLIAVAYIVQTHIMREYPSEFALALSHNVCVSISCAFVSLFVEENNPSAWIMRSKIMLICIVATGVVNSTSYVVESWTVRYKGAVFLAMFRPLSIVTAVVLGAIFLGDSLYLGSVIGGTLISIGFSVHNSLFHIANGFSALAKSSVLRHIGMLV.

5 consecutive transmembrane segments (helical) span residues 48-68 (IIIG…AVAY), 82-102 (FALA…VSLF), 117-137 (IMLI…VVES), 146-166 (VFLA…GAIF), and 176-196 (VIGG…FHIA). Residues 65–186 (AVAYIVQTHI…IGGTLISIGF (122 aa)) enclose the EamA domain.

The protein belongs to the drug/metabolite transporter (DMT) superfamily. Plant drug/metabolite exporter (P-DME) (TC 2.A.7.4) family.

Its subcellular location is the membrane. The chain is WAT1-related protein At3g28060 from Arabidopsis thaliana (Mouse-ear cress).